A 342-amino-acid polypeptide reads, in one-letter code: Foldase protein PrsA (342 aa).

The N-terminal stretch at 1–22 is a signal peptide; that stretch reads MVSVKKIVASALVGVLMFSAVG. A lipid anchor (N-palmitoyl cysteine) is attached at C23. The S-diacylglycerol cysteine moiety is linked to residue C23. A PpiC domain is found at 189–284; sequence DSGVLTKHLL…FGYHIIQAGA (96 aa).

Belongs to the PrsA family.

The protein resides in the cell membrane. It carries out the reaction [protein]-peptidylproline (omega=180) = [protein]-peptidylproline (omega=0). In terms of biological role, plays a major role in protein secretion by helping the post-translocational extracellular folding of several secreted proteins. This is Foldase protein PrsA from Clostridium perfringens (strain ATCC 13124 / DSM 756 / JCM 1290 / NCIMB 6125 / NCTC 8237 / Type A).